An 876-amino-acid polypeptide reads, in one-letter code: Phosphoenolpyruvate carboxylase (876 aa).

Catalysis depends on residues His138 and Lys543.

Belongs to the PEPCase type 1 family. Mg(2+) is required as a cofactor.

It carries out the reaction oxaloacetate + phosphate = phosphoenolpyruvate + hydrogencarbonate. Functionally, forms oxaloacetate, a four-carbon dicarboxylic acid source for the tricarboxylic acid cycle. This chain is Phosphoenolpyruvate carboxylase, found in Pseudomonas fluorescens (strain ATCC BAA-477 / NRRL B-23932 / Pf-5).